The following is a 260-amino-acid chain: MNQRPLVIKLGGAVLSSIDTLTLLFKTISNYQQQAKRSLIIVHGGGYLVDELMAKLQLETIKKEGLRVTPKDQIGYITGALAGTANKMLQGQAMKNNVKAIGLSLADGGLCQITQLNPELGNVGLATAGDAKVLEAILATQVTPIISSIGITNDGELMNVNADQAAVAVATALDADLVLLSDVPGVLDAEKQLIKSLDSAQAEMLIHQAVITDGMIVKVRAALDAAQELGRAIEVASWRSPEKLAELFIGNSIGTQFQPQ.

Residues 45–46, arginine 67, and asparagine 159 each bind substrate; that span reads GG.

The protein belongs to the acetylglutamate kinase family. ArgB subfamily.

It is found in the cytoplasm. The catalysed reaction is N-acetyl-L-glutamate + ATP = N-acetyl-L-glutamyl 5-phosphate + ADP. Its pathway is amino-acid biosynthesis; L-arginine biosynthesis; N(2)-acetyl-L-ornithine from L-glutamate: step 2/4. Functionally, catalyzes the ATP-dependent phosphorylation of N-acetyl-L-glutamate. This Aliivibrio fischeri (strain ATCC 700601 / ES114) (Vibrio fischeri) protein is Acetylglutamate kinase.